A 184-amino-acid chain; its full sequence is Casparian strip membrane protein 1 (184 aa).

At 1–24 (MKESGEHGETSKAPLNRGVSKGLS) the chain is on the cytoplasmic side. The helical transmembrane segment at 25 to 45 (VLDLILRFIAIIGTLASAIAM) threads the bilayer. Residues 46 to 72 (GTTNETLPFFTQFIRFKAQYSDLPTLT) are Extracellular-facing. The N-linked (GlcNAc...) asparagine glycan is linked to Asn49. The helical transmembrane segment at 73–93 (FFVVANSIVCAYLILSLPLSI) threads the bilayer. Topologically, residues 94 to 105 (VHIIRSRAKFSR) are cytoplasmic. The chain crosses the membrane as a helical span at residues 106-126 (LLLIFLDAVMLALVTAGASAA). The Extracellular portion of the chain corresponds to 127 to 159 (AAIVYLAHKGNVRANWLAICQQFDSFCERISGS). The helical transmembrane segment at 160–180 (LIGSFGAMVVLILLILLSAIA) threads the bilayer. The Cytoplasmic portion of the chain corresponds to 181–184 (LARR).

Belongs to the Casparian strip membrane proteins (CASP) family. In terms of assembly, homodimer and heterodimers.

The protein resides in the cell membrane. Regulates membrane-cell wall junctions and localized cell wall deposition. Required for establishment of the Casparian strip membrane domain (CSD) and the subsequent formation of Casparian strips, a cell wall modification of the root endodermis that determines an apoplastic barrier between the intraorganismal apoplasm and the extraorganismal apoplasm and prevents lateral diffusion. This Panicum virgatum (Blackwell switchgrass) protein is Casparian strip membrane protein 1.